Here is a 369-residue protein sequence, read N- to C-terminus: MRKRYDTIVIGGGIIGTSIAYHLAKAGKKTAVFESGEVGKKATSAAAGMLGAHAECDKPGTFFEFARASQKAYKRLTGELKDISGIDIRRHDGGILKLAFSESDREHLMQMGALDSVEWLEADEVYKLEPNAGKGILGANFIRDDVHVEPAAVCRAFARGARMLGADVFEYTPVLSIESEAGAVRVTSASGTAEAEHAVIASGVWSGALFKQIGLDKRFYPVKGECLSVWNDGISLTRTLYHDHCYIVPRHSGRLVVGATMKPGDWNEQPELGGIEELIRKAKSMLPGIESMKIDQCWAGLRPETGDGNPYIGRHPENDRILFAAGHFRNGILLAPATGEMMADMILGNPVKTEWIEAFKAERKEAVHR.

FAD is bound by residues 14–15 (II), 34–35 (ES), 42–43 (AT), 47–49 (AGM), and Val-174. 2 residues coordinate substrate: Arg-302 and Arg-329. Residue 327–333 (HFRNGIL) participates in FAD binding.

The protein belongs to the DAO family. ThiO subfamily. As to quaternary structure, homotetramer. The cofactor is FAD.

The catalysed reaction is glycine + O2 + H2O = glyoxylate + H2O2 + NH4(+). It carries out the reaction glyphosate + O2 + H2O = aminomethylphosphonate + glyoxylate + H2O2 + H(+). It catalyses the reaction N-ethylglycine + O2 + H2O = ethylamine + glyoxylate + H2O2. The enzyme catalyses sarcosine + O2 + H2O = methylamine + glyoxylate + H2O2. The catalysed reaction is D-alanine + O2 + H2O = pyruvate + H2O2 + NH4(+). Its pathway is cofactor biosynthesis; thiamine diphosphate biosynthesis. In terms of biological role, catalyzes the FAD-dependent oxidative deamination of glycine, leading to glyoxylate, ammonia and hydrogen peroxide. Is also able to act on various amines and D-amino acids to yield the corresponding alpha-keto acids, ammonia/amine, and hydrogen peroxide. Can also oxidize the herbicide glyphosate (N-phosphonomethylglycine), and thus may be involved in the degradation pathway that allows B.licheniformis J33-8 to grow with glyphosate as the sole source of carbon. Is essential for thiamine biosynthesis since the oxidation of glycine catalyzed by ThiO generates the glycine imine intermediate (dehydroglycine) required for the biosynthesis of the thiazole ring of thiamine pyrophosphate. The chain is Glycine oxidase from Bacillus licheniformis.